Here is a 732-residue protein sequence, read N- to C-terminus: MGITGLIPFVGKASSQLHLKDIRGSTVAVDTYCWLHKGVFGCAEKLARGEDTDVYIQYCLKYVNMLLSYDIKPILVFDGQHLPAKALTEKRRRDSRKQSKERAAELLRLGRIEEARSHMRRCVDVTHDMALRLIRECRSRNVDCIVAPYEADAQMAWLNRADVAQYIITEDSDLTLFGAKNIIFKLDLNGSGLLVEAEKLHLAMGCTEEKYHFDKFRRMCILSGCDYLDSLPGIGLAKACKFILKTEQEDMRIALKKIPSYLNMRNLEVDDDYIENFMKAEATFRHMFIYNPLERRMQRLCALEDYETDERYCSNAGTLLEDSEQALHLALGNLNPFSMKRLDSWTPEKAWPTPKNVKRSKHKSIWQTNFQSENTHTPKKENPCALFFKKVDFVGKTLNEEIEANQRLEQAKQTEAELFNMYSFKAKRRRSPSREDSVDQERTPPPSPVHKSRHNPFAKERTGEEANQRSPVVCENASLLRLLSPKKASPLDGEAGVKKVDSLKRSIFAKEQVQIRSRFFATQDEQTRLQREHLRDTENDDMDEQKLSSHSGHKKLRLVCKDIPGKNPIRQRCSSQISDGETDTDTTASSLLESQDKGVPSPLESQEDLNNSQPQIPTEGNTNSTTIRIKSLDLLLENSPEPTQESDRNNNDAIILLSDDSCSSDQRASSTSSSSQQRQNFLPTSKRRVGLSKPSTAKKGTPKSRTNGKLGAVSQNQTKLSMFGFQTKPVLK.

Residues 1-99 (MGITGLIPFV…KRRRDSRKQS (99 aa)) form an N-domain region. Residues Asp-30, Asp-78, Glu-150, Asp-152, Asp-171, Asp-173, and Asp-226 each contribute to the Mg(2+) site. Residues 138-230 (RSRNVDCIVA…ILSGCDYLDS (93 aa)) are I-domain. Disordered stretches follow at residues 422–471 (YSFK…QRSP), 524–625 (DEQT…TNST), and 661–716 (SCSS…VSQN). Phosphoserine occurs at positions 431 and 433. Residues 432–442 (PSREDSVDQER) are compositionally biased toward basic and acidic residues. Thr-443 is modified (phosphothreonine). Ser-447 bears the Phosphoserine mark. 2 stretches are compositionally biased toward basic and acidic residues: residues 457–467 (FAKERTGEEAN) and 525–537 (EQTRLQREHLRDT). Polar residues-rich tracts occupy residues 572 to 593 (RCSSQISDGETDTDTTASSLLE) and 608 to 625 (DLNNSQPQIPTEGNTNST). Over residues 661 to 677 (SCSSDQRASSTSSSSQQ) the composition is skewed to low complexity. Residues 703–716 (KSRTNGKLGAVSQN) show a composition bias toward polar residues.

It belongs to the XPG/RAD2 endonuclease family. EXO1 subfamily. It depends on Mg(2+) as a cofactor. As to expression, specifically expressed in the female germline.

Its subcellular location is the nucleus. Its function is as follows. 5'-&gt;3' double-stranded DNA exonuclease which may also contain a cryptic 3'-&gt;5' double-stranded DNA exonuclease activity. Also exhibits endonuclease activity against 5'-overhanging flap structures similar to those generated by displacement synthesis when DNA polymerase encounters the 5'-end of a downstream Okazaki fragment. Required for DNA mismatch repair (MMR). The polypeptide is Exonuclease 1 (tos) (Drosophila melanogaster (Fruit fly)).